The primary structure comprises 238 residues: Probable transglycosylase SceD 3 (238 aa).

An N-terminal signal peptide occupies residues M1 to A27. A disordered region spans residues Y82–N161. The span at A89 to E156 shows a compositional bias: low complexity.

It belongs to the transglycosylase family. SceD subfamily.

It localises to the secreted. Its function is as follows. Is able to cleave peptidoglycan and affects clumping and separation of bacterial cells. In Staphylococcus saprophyticus subsp. saprophyticus (strain ATCC 15305 / DSM 20229 / NCIMB 8711 / NCTC 7292 / S-41), this protein is Probable transglycosylase SceD 3 (sceD3).